A 374-amino-acid chain; its full sequence is Heat stress transcription factor A-8 (374 aa).

A DNA-binding region spans residues 17–112 (VAPFLRKCYD…LLKNVIRRKN (96 aa)). Positions 126 to 192 (TTYAQEKSGL…EMLSFLVMVM (67 aa)) are hydrophobic repeat HR-A/B. The AHA1 motif lies at 285–294 (DGAWEKLLLL). The Nuclear localization signal signature appears at 298-303 (RKKTKK). Residues 330 to 339 (KSYMLKLISE) carry the AHA2 motif. Positions 363–370 (LTEQMELL) match the Nuclear export signal motif.

Belongs to the HSF family. Class A subfamily. In terms of assembly, homotrimer. Post-translationally, exhibits temperature-dependent phosphorylation.

The protein resides in the cytoplasm. Its subcellular location is the nucleus. Functionally, transcriptional activator that specifically binds DNA sequence 5'-AGAAnnTTCT-3' known as heat shock promoter elements (HSE). This chain is Heat stress transcription factor A-8 (HSFA8), found in Arabidopsis thaliana (Mouse-ear cress).